Reading from the N-terminus, the 242-residue chain is Protein Thf1 (242 aa).

Residues 178 to 209 (SSDKLQKDLDLYRSNLDKMQQLLTVIEDTLEA) are a coiled coil. Residues 212–242 (KKRASQKLEKKPEVVEEKEHKENEEQQQSSN) are disordered. A compositionally biased stretch (basic and acidic residues) spans 217 to 235 (QKLEKKPEVVEEKEHKENE).

It belongs to the THF1 family.

Functionally, may be involved in photosynthetic membrane biogenesis. This is Protein Thf1 from Crocosphaera subtropica (strain ATCC 51142 / BH68) (Cyanothece sp. (strain ATCC 51142)).